The following is a 652-amino-acid chain: MSQIHKHTIPANIADRCLINPQQYEAMYQQSINAPDTFWGEQGKILDWIKPYQKVKNTSFAPGNVSIKWYEDGTLNLAANCLDRHLQENGDRTAIIWEGDDASQSKHISYKELHRDVCRFANTLLKLGIKKGDVVAIYMPMVPEAAVAMLACARIGAVHSVIFGGFSPEAVAGRIIDSNSRLVITSDEGVRAGRSIPLKKNVDDALKNPNVTSVEHVVVLKRTGGKIDWQEGRDLWWHDQVEQASDQHQAEEMNAEDPLFILYTSGSTGKPKGVLHTTGGYLVYAALTFKYVFDYHPGDIYWCTADVGWVTGHSYLLYGPLACGATTLMFEGVPNWPTPARMAQVVDKHQVNILYTAPTAIRALMAEGDKAIEGTDRSSLRILGSVGEPINPEAWEWYWKKIGNEKCPVVDTWWQTETGGFMITPLPGATELKAGSATRPFFGVQPALVDNEGNPLEGATEGSLVITDSWPGQARTLFGDHERFEQTYFSTFKNMYFSGDGARRDEDSYYWITGRVDDVLNVSGHRLGTAEIESALVAHPKIAEAAVVGIPHNIKGQAIYAYVTLNHGEEPSPELYAEVRNWVRKEIGPLATPDVLHWTDSLPKTRSGKIMRRILRKIAAGDTSNLGDTSTLADPGVVEKLLEEKQAIAMPS.

Residues 191 to 194, Thr-311, and Asn-335 contribute to the CoA site; that span reads RAGR. ATP-binding positions include 387–389, 411–416, Asp-500, and Arg-515; these read GEP and DTWWQT. Ser-523 provides a ligand contact to CoA. Arg-526 contacts ATP. The Mg(2+) site is built by Val-537, His-539, and Ile-542. Arg-584 lines the CoA pocket. Lys-609 carries the N6-acetyllysine modification.

Belongs to the ATP-dependent AMP-binding enzyme family. Mg(2+) serves as cofactor. Acetylated. Deacetylation by the SIR2-homolog deacetylase activates the enzyme.

It carries out the reaction acetate + ATP + CoA = acetyl-CoA + AMP + diphosphate. Catalyzes the conversion of acetate into acetyl-CoA (AcCoA), an essential intermediate at the junction of anabolic and catabolic pathways. Acs undergoes a two-step reaction. In the first half reaction, Acs combines acetate with ATP to form acetyl-adenylate (AcAMP) intermediate. In the second half reaction, it can then transfer the acetyl group from AcAMP to the sulfhydryl group of CoA, forming the product AcCoA. In terms of biological role, enables the cell to use acetate during aerobic growth to generate energy via the TCA cycle, and biosynthetic compounds via the glyoxylate shunt. Acetylates CheY, the response regulator involved in flagellar movement and chemotaxis. The protein is Acetyl-coenzyme A synthetase of Escherichia coli O157:H7.